A 1373-amino-acid polypeptide reads, in one-letter code: DNA-directed RNA polymerase subunit beta (1373 aa).

The protein belongs to the RNA polymerase beta chain family. The RNAP catalytic core consists of 2 alpha, 1 beta, 1 beta' and 1 omega subunit. When a sigma factor is associated with the core the holoenzyme is formed, which can initiate transcription.

The enzyme catalyses RNA(n) + a ribonucleoside 5'-triphosphate = RNA(n+1) + diphosphate. Functionally, DNA-dependent RNA polymerase catalyzes the transcription of DNA into RNA using the four ribonucleoside triphosphates as substrates. This Rhodopseudomonas palustris (strain BisB18) protein is DNA-directed RNA polymerase subunit beta.